A 424-amino-acid chain; its full sequence is MAKNIQAIRGMNDYLPGETAIWQRIESTLKNVLGSYGYSEIRLPIVEQTPLFKRAIGEVTDVVEKEMYTFEDRNGDSLTLRPEGTAGCVRAGIEHGLLYNQEQRLWYIGPMFRHERPQKGRYRQFHQLGAEVFGLQGPDIDAELIMLTARWWRALGIAEHVSLELNSIGSLEARANYRDALVAFLEQHQETLDEDCKRRMYTNPLRVLDSKNPDVQALLNDAPALGDYLDDDSREHFAGLCKLLDAAGIAYTVNQRLVRGLDYYNRTVFEWVTNSLGSQGTVCAGGRYDGLVEQLGGRATPAVGFAMGLERLVLLVQAVNPEFIASPVVDIYLVAAGTETQSAAMTLAERLRDEMPDVKLITNHGGGNFKKQFARADKWGARIALVLGESEVANGTVVVKDLRSGEQTAVAQDSVAAHLRTLLG.

Belongs to the class-II aminoacyl-tRNA synthetase family. In terms of assembly, homodimer.

The protein resides in the cytoplasm. It carries out the reaction tRNA(His) + L-histidine + ATP = L-histidyl-tRNA(His) + AMP + diphosphate + H(+). This Salmonella arizonae (strain ATCC BAA-731 / CDC346-86 / RSK2980) protein is Histidine--tRNA ligase.